Reading from the N-terminus, the 292-residue chain is Acetyl-coenzyme A carboxylase carboxyl transferase subunit beta (292 aa).

Positions Met36–Glu292 constitute a CoA carboxyltransferase N-terminal domain. Positions 40, 43, 59, and 62 each coordinate Zn(2+). A C4-type zinc finger spans residues Cys40–Cys62.

This sequence belongs to the AccD/PCCB family. Acetyl-CoA carboxylase is a heterohexamer composed of biotin carboxyl carrier protein (AccB), biotin carboxylase (AccC) and two subunits each of ACCase subunit alpha (AccA) and ACCase subunit beta (AccD). The cofactor is Zn(2+).

The protein resides in the cytoplasm. It carries out the reaction N(6)-carboxybiotinyl-L-lysyl-[protein] + acetyl-CoA = N(6)-biotinyl-L-lysyl-[protein] + malonyl-CoA. Its pathway is lipid metabolism; malonyl-CoA biosynthesis; malonyl-CoA from acetyl-CoA: step 1/1. Functionally, component of the acetyl coenzyme A carboxylase (ACC) complex. Biotin carboxylase (BC) catalyzes the carboxylation of biotin on its carrier protein (BCCP) and then the CO(2) group is transferred by the transcarboxylase to acetyl-CoA to form malonyl-CoA. The sequence is that of Acetyl-coenzyme A carboxylase carboxyl transferase subunit beta from Clostridium perfringens (strain ATCC 13124 / DSM 756 / JCM 1290 / NCIMB 6125 / NCTC 8237 / Type A).